Reading from the N-terminus, the 335-residue chain is Ornithine carbamoyltransferase (335 aa).

Carbamoyl phosphate contacts are provided by residues 57–60 (STRT), Arg108, and 135–138 (HPTQ). Residues Asn168, Asp232, and 236–237 (SM) contribute to the L-ornithine site. Residues 274–275 (CL) and Arg319 each bind carbamoyl phosphate.

The protein belongs to the aspartate/ornithine carbamoyltransferase superfamily. OTCase family.

It localises to the cytoplasm. The enzyme catalyses carbamoyl phosphate + L-ornithine = L-citrulline + phosphate + H(+). The protein operates within amino-acid degradation; L-arginine degradation via ADI pathway; carbamoyl phosphate from L-arginine: step 2/2. Functionally, reversibly catalyzes the transfer of the carbamoyl group from carbamoyl phosphate (CP) to the N(epsilon) atom of ornithine (ORN) to produce L-citrulline. The polypeptide is Ornithine carbamoyltransferase (Limosilactobacillus reuteri (strain DSM 20016) (Lactobacillus reuteri)).